The chain runs to 232 residues: Ubiquinone biosynthesis O-methyltransferase (232 aa).

S-adenosyl-L-methionine contacts are provided by arginine 36, glycine 55, aspartate 76, and methionine 120.

The protein belongs to the methyltransferase superfamily. UbiG/COQ3 family.

The catalysed reaction is a 3-demethylubiquinol + S-adenosyl-L-methionine = a ubiquinol + S-adenosyl-L-homocysteine + H(+). The enzyme catalyses a 3-(all-trans-polyprenyl)benzene-1,2-diol + S-adenosyl-L-methionine = a 2-methoxy-6-(all-trans-polyprenyl)phenol + S-adenosyl-L-homocysteine + H(+). The protein operates within cofactor biosynthesis; ubiquinone biosynthesis. In terms of biological role, O-methyltransferase that catalyzes the 2 O-methylation steps in the ubiquinone biosynthetic pathway. In Thiobacillus denitrificans (strain ATCC 25259 / T1), this protein is Ubiquinone biosynthesis O-methyltransferase.